The chain runs to 131 residues: Ribonuclease VapC13 (131 aa).

Positions 2–128 (ILVDSNIPMY…RGFDSYPGIK (127 aa)) constitute a PINc domain. Mg(2+) contacts are provided by aspartate 5 and aspartate 99.

It belongs to the PINc/VapC protein family. Mg(2+) serves as cofactor.

It localises to the secreted. Functionally, toxic component of a type II toxin-antitoxin (TA) system. An RNase. The cognate antitoxin is VapB13. This is Ribonuclease VapC13 from Mycobacterium tuberculosis (strain ATCC 25618 / H37Rv).